The sequence spans 423 residues: Testin (423 aa).

2 disordered regions span residues 1–21 and 138–169; these read MSAT…ACAS and EKQP…PSKC. Positions 97 to 204 constitute a PET domain; sequence MILTNPVAAK…GDVKFPSEMN (108 aa). Residues 160–169 are compositionally biased toward basic and acidic residues; sequence PAHDQDPSKC. 3 LIM zinc-binding domains span residues 236–299, 301–361, and 364–423; these read YSCY…CDSE, PRCA…NHAV, and QGCH…RMMS.

The protein belongs to the prickle / espinas / testin family. As to quaternary structure, interacts via LIM domain 1 with ZYX. Interacts (via LIM domain 3) with ENAH and VASP. Interacts with ALKBH4, talin, actin, alpha-actinin, GRIP1 and PXN. Interacts (via LIM domain 2) with ACTL7A (via N-terminus). Heterodimer with ACTL7A; the heterodimer interacts with ENAH to form a heterotrimer. Detected at the acrosome of round spermatids (at protein level). Isoform TES1 transcript is highly expressed in adult testis and detected at low levels in other tissues. Isoform TES2 transcript is highly expressed in testis, kidney and spleen; intermediate in thymus, submaxillary gland and lung; detected at low levels in other tissues.

It localises to the cytoplasm. The protein resides in the cell junction. The protein localises to the focal adhesion. Functionally, scaffold protein that may play a role in cell adhesion, cell spreading and in the reorganization of the actin cytoskeleton. Plays a role in the regulation of cell proliferation. May act as a tumor suppressor. In Mus musculus (Mouse), this protein is Testin (Tes).